A 535-amino-acid polypeptide reads, in one-letter code: MWRADRWAPLLLFLLQSALGRPRLAPPRNVTLFSQNFTVYLTWLPGLGSPPNVTYFVTYQSYIKTGWRPVEHCAGIKALVCPLMCLKKLNLYSKFKGRVQAASAHGRSPRVESRYLEYLFDVELAPPTLVLTQMEKILRVNATYQLPPCMPSLELKYQVEFWKEGLGSKTLFPDTPYGQPVQIPLQQGASRRHCLSARTVYTLIDIKYSQFSEPSCIFLEAPGDKRAVLAMPSLLLLLIAAVAAGVAWKIMKGNPWFQGVKTPRALDFSEYRYPVATFQPSGPEFSDDLILCPQKELTIRNRPAPQVRNPATLQAGPERDSTEDEDEDTDYDDDGDSVQPYLERPLFISEKPRVMEHSETDESGVDSGGPWTSPVGSDGSSAWDSSDRSWSSTGDSSYKDEVGSSSCLDRKEPDQAPCGDWLQEALPCLEFSEDLGTVEEPLKDGLSGWRISGSLSSKRDLAPVEPPVSLQTLTFCWVNNPEGEEEQEDEEEEEEEEEEEDWESEPKGSNAGCWGTSSVQRTEVRGRMLGDYLVR.

The signal sequence occupies residues 1–20; that stretch reads MWRADRWAPLLLFLLQSALG. Topologically, residues 21 to 227 are extracellular; that stretch reads RPRLAPPRNV…FLEAPGDKRA (207 aa). The 96-residue stretch at 26–121 folds into the Fibronectin type-III domain; it reads PPRNVTLFSQ…ESRYLEYLFD (96 aa). Residues Asn29, Asn36, and Asn52 are each glycosylated (N-linked (GlcNAc...) asparagine). Cystine bridges form between Cys73–Cys81, Cys85–Cys149, and Cys194–Cys216. Asn141 is a glycosylation site (N-linked (GlcNAc...) asparagine). The chain crosses the membrane as a helical span at residues 228–248; sequence VLAMPSLLLLLIAAVAAGVAW. Residues 249 to 535 are Cytoplasmic-facing; the sequence is KIMKGNPWFQ…GRMLGDYLVR (287 aa). 2 disordered regions span residues 301-419 and 478-520; these read NRPA…APCG and VNNP…SSVQ. A compositionally biased stretch (acidic residues) spans 321-336; that stretch reads STEDEDEDTDYDDDGD. Over residues 350-360 the composition is skewed to basic and acidic residues; it reads EKPRVMEHSET. Low complexity predominate over residues 376-396; that stretch reads GSDGSSAWDSSDRSWSSTGDS. Residues 397-414 show a composition bias toward basic and acidic residues; the sequence is SYKDEVGSSSCLDRKEPD. Residues 482 to 503 are compositionally biased toward acidic residues; it reads EGEEEQEDEEEEEEEEEEEDWE.

It belongs to the type II cytokine receptor family. As to quaternary structure, heterodimer with IL10RB. In terms of processing, ubiquitinated by FBXO45-containing E3 ligase leading to proteasomal degradation.

It is found in the membrane. Functionally, the IFNLR1/IL10RB dimer is a receptor for the cytokine ligands IFNL2 and IFNL3 and mediates their antiviral activity. The ligand/receptor complex stimulate the activation of the JAK/STAT signaling pathway leading to the expression of IFN-stimulated genes (ISG), which contribute to the antiviral state. Determines the cell type specificity of the lambda interferon action. Shows a more restricted pattern of expression in the epithelial tissues thereby limiting responses to lambda interferons primarily to epithelial cells of the respiratory, gastrointestinal, and reproductive tracts. Seems not to be essential for early virus-activated host defense in vaginal infection, but plays an important role in Toll-like receptor (TLR)-induced antiviral defense. Plays a significant role in the antiviral immune defense in the intestinal epithelium. This chain is Interferon lambda receptor 1 (Ifnlr1), found in Mus musculus (Mouse).